The sequence spans 87 residues: Toxin CsEv2 (87 aa).

A signal peptide spans 1-19 (MNSLLIITACLFLIGTVWA). Residues 20–85 (KEGYLVNKST…TYPLPNKSCS (66 aa)) form the LCN-type CS-alpha/beta domain. Cystine bridges form between Cys31–Cys84, Cys35–Cys60, Cys44–Cys65, and Cys48–Cys67.

Belongs to the long (4 C-C) scorpion toxin superfamily. Sodium channel inhibitor family. Beta subfamily. Expressed by the venom gland.

It localises to the secreted. Functionally, beta toxins bind voltage-independently at site-4 of sodium channels (Nav) and shift the voltage of activation toward more negative potentials thereby affecting sodium channel activation and promoting spontaneous and repetitive firing. Induces immediate paralysis in crickets after injection, with a total paralysis occurring within 15-30 minutes and lasting for 1-2 hours. Is also lethal to vertebrate (chicks) when injected in very high dosages (more that 100 mg/kg). This Centruroides sculpturatus (Arizona bark scorpion) protein is Toxin CsEv2.